Here is a 157-residue protein sequence, read N- to C-terminus: Transcription elongation factor GreA (157 aa).

Residues Ser47–Glu75 adopt a coiled-coil conformation.

The protein belongs to the GreA/GreB family.

Functionally, necessary for efficient RNA polymerase transcription elongation past template-encoded arresting sites. The arresting sites in DNA have the property of trapping a certain fraction of elongating RNA polymerases that pass through, resulting in locked ternary complexes. Cleavage of the nascent transcript by cleavage factors such as GreA or GreB allows the resumption of elongation from the new 3'terminus. GreA releases sequences of 2 to 3 nucleotides. The sequence is that of Transcription elongation factor GreA from Chloroflexus aurantiacus (strain ATCC 29366 / DSM 635 / J-10-fl).